The sequence spans 692 residues: Serine/threonine-protein phosphatase PP-Z1 (692 aa).

Disordered stretches follow at residues 1–309 and 321–357; these read MGNS…DIEN and ENVN…PKKF. Residue Gly-2 is the site of N-myristoyl glycine attachment. Composition is skewed to low complexity over residues 32–41, 49–69, and 91–122; these read SHSVKSAKSN, SLPS…STPS, and SSSH…RRSS. Ser-49 carries the phosphoserine modification. Residues 170–179 are compositionally biased toward acidic residues; it reads LTDDDNDDKD. Position 171 is a phosphothreonine (Thr-171). Over residues 190–204 the composition is skewed to low complexity; that stretch reads RSSNSRPSSIRSGSV. Residues 207 to 216 show a composition bias toward basic and acidic residues; the sequence is RKSDVTHEEP. Phosphoserine is present on residues Ser-209 and Ser-222. Polar residues-rich tracts occupy residues 217-229 and 251-267; these read NNGS…QENY and FGSD…NSPG. Residue Thr-261 is modified to Phosphothreonine. Ser-265 carries the phosphoserine modification. Over residues 280-289 the composition is skewed to low complexity; sequence TSNSTSSLNH. The span at 291-303 shows a compositional bias: basic and acidic residues; that stretch reads SSRDIYPSKHISN. Residues 321–331 are compositionally biased toward polar residues; that stretch reads ENVNDKNNNIT. Mn(2+) contacts are provided by Asp-419, His-421, Asp-447, and Asn-479. The active-site Proton donor is His-480. Positions 528 and 603 each coordinate Mn(2+). The segment at 672–692 is disordered; it reads LANQQQQMMETSITNDNESQQ. Polar residues predominate over residues 673-692; sequence ANQQQQMMETSITNDNESQQ. Residue Ser-690 is modified to Phosphoserine.

This sequence belongs to the PPP phosphatase family. PP-Z subfamily. In terms of assembly, interacts with SIS2 and VHS3, which regulate its activity. Mn(2+) serves as cofactor.

It carries out the reaction O-phospho-L-seryl-[protein] + H2O = L-seryl-[protein] + phosphate. The enzyme catalyses O-phospho-L-threonyl-[protein] + H2O = L-threonyl-[protein] + phosphate. Its activity is regulated as follows. Inhibited by the regulatory subunits VHS3 and SIS2. Functionally, essential for the maintenance of cell size and integrity in response to osmotic stress. This Saccharomyces cerevisiae (strain ATCC 204508 / S288c) (Baker's yeast) protein is Serine/threonine-protein phosphatase PP-Z1 (PPZ1).